A 97-amino-acid chain; its full sequence is U6-theraphotoxin-Hhn1a 3 (97 aa).

Positions 1–33 (MLIKQFSRRSKNTKVQILLAFAALFVLAVGSYA) are cleaved as a signal peptide. Residues 34 to 61 (SESKKLDLRDALFSAMFSADYQLNPQER) constitute a propeptide that is removed on maturation. Disulfide bonds link cysteine 63-cysteine 77, cysteine 70-cysteine 82, and cysteine 76-cysteine 89.

Belongs to the neurotoxin 10 (Hwtx-1) family. 12 (Hntx-12) subfamily. As to expression, expressed by the venom gland.

It is found in the secreted. Ion channel inhibitor. The protein is U6-theraphotoxin-Hhn1a 3 of Cyriopagopus hainanus (Chinese bird spider).